A 242-amino-acid polypeptide reads, in one-letter code: uncharacterized protein (242 aa).

Glycine 198, isoleucine 218, and leucine 227 together coordinate S-adenosyl-L-methionine.

This sequence belongs to the class IV-like SAM-binding methyltransferase superfamily. RNA methyltransferase TrmH family.

This is an uncharacterized protein from Mycoplasma pneumoniae (strain ATCC 29342 / M129 / Subtype 1) (Mycoplasmoides pneumoniae).